Consider the following 726-residue polypeptide: Methionine--tRNA ligase (726 aa).

The 'HIGH' region signature appears at 12 to 22; that stretch reads PYVNNIPHLGN. Residues Cys143, Cys146, Cys155, and Cys158 each contribute to the Zn(2+) site. The 'KMSKS' region signature appears at 330–334; it reads KFSKS. ATP is bound at residue Lys333. The tRNA-binding domain occupies 562 to 667; it reads FSEQICLKTV…DNPIPGERVI (106 aa).

This sequence belongs to the class-I aminoacyl-tRNA synthetase family. MetG type 1 subfamily. As to quaternary structure, homodimer. It depends on Zn(2+) as a cofactor.

The protein resides in the cytoplasm. The enzyme catalyses tRNA(Met) + L-methionine + ATP = L-methionyl-tRNA(Met) + AMP + diphosphate. Its function is as follows. Is required not only for elongation of protein synthesis but also for the initiation of all mRNA translation through initiator tRNA(fMet) aminoacylation. In Borrelia duttonii (strain Ly), this protein is Methionine--tRNA ligase.